Here is a 370-residue protein sequence, read N- to C-terminus: Galanin receptor type 3 (370 aa).

The Extracellular segment spans residues 1–20 (MADIQNISLDSPGSVGAVAV). An N-linked (GlcNAc...) asparagine glycan is attached at N6. The chain crosses the membrane as a helical span at residues 21–41 (PVVFALIFLLGMVGNGLVLAV). Residues 42–57 (LLQPGPSAWQEPGSTT) are Cytoplasmic-facing. The chain crosses the membrane as a helical span at residues 58–78 (DLFILNLAVADLCFILCCVPF). The Extracellular portion of the chain corresponds to 79-96 (QAAIYTLDAWLFGAFVCK). A disulfide bridge connects residues C95 and C172. The helical transmembrane segment at 97–118 (TVHLLIYLTMYASSFTLAAVSV) threads the bilayer. The Cytoplasmic segment spans residues 119-138 (DRYLAVRHPLRSRALRTPRN). Residues 139 to 159 (ARAAVGLVWLLAALFSAPYLS) form a helical membrane-spanning segment. The Extracellular segment spans residues 160-184 (YYGTVRYGALELCVPAWEDARRRAL). Residues 185–205 (DVATFAAGYLLPVTVVSLAYG) traverse the membrane as a helical segment. The Cytoplasmic portion of the chain corresponds to 206 to 236 (RTLCFLWAAVGPAGAAAAEARRRATGRAGRA). The chain crosses the membrane as a helical span at residues 237 to 257 (MLTVAALYALCWGPHHALILC). Residues 258–259 (FW) are Extracellular-facing. The chain crosses the membrane as a helical span at residues 260–280 (YGRFAFSPATYACRLASHCLA). Residues 281-370 (YANSCLNPLV…RLTLSARGPQ (90 aa)) lie on the Cytoplasmic side of the membrane. C308 carries S-palmitoyl cysteine lipidation. The tract at residues 328 to 370 (QPASSGPAGYPGDARPRGWSMEPRGDALRGGETRLTLSARGPQ) is disordered. Residues 350-359 (PRGDALRGGE) are compositionally biased toward basic and acidic residues.

This sequence belongs to the G-protein coupled receptor 1 family.

The protein resides in the cell membrane. Functionally, receptor for the hormone galanin and spexin-1. In Mus musculus (Mouse), this protein is Galanin receptor type 3 (Galr3).